The sequence spans 208 residues: Translation initiation factor IF-3 (208 aa).

This sequence belongs to the IF-3 family. As to quaternary structure, monomer.

The protein localises to the cytoplasm. IF-3 binds to the 30S ribosomal subunit and shifts the equilibrium between 70S ribosomes and their 50S and 30S subunits in favor of the free subunits, thus enhancing the availability of 30S subunits on which protein synthesis initiation begins. This chain is Translation initiation factor IF-3, found in Parabacteroides distasonis (strain ATCC 8503 / DSM 20701 / CIP 104284 / JCM 5825 / NCTC 11152).